We begin with the raw amino-acid sequence, 430 residues long: uncharacterized protein (430 aa).

Helical transmembrane passes span 18-38 (LFLLTIGGLYSLGIALSNTFV), 49-69 (FIDLAIYNLSIVTMQPITFYL), 80-100 (VFILRFGVIFLAAFYLSVLLA), 109-129 (VLIGAVLGVGYGFYWLAFNVL), 145-165 (FMGILSSSAGMIGPIVAGFVI), 175-195 (TVIFSLSLSLFALAVVMSFFL), 235-255 (IFVFLISVFVFIETNSELALG), 256-276 (TFGLVNSAVSFFAYYFASRLI), 285-305 (ILLGGLILYGALFLILFHMSF), 307-327 (TLLTYGVFIAIGYPLLLVPYV), 353-373 (MFLNAGRIVSILCFLLIVALL), and 377-397 (VGIPLSLAILGIGHPLIYYFV). The interval 407–430 (GENETMEEDGQKRVTEPTLLKGER) is disordered. Residues 415 to 430 (DGQKRVTEPTLLKGER) show a composition bias toward basic and acidic residues.

The protein resides in the cell membrane. This is an uncharacterized protein from Bacillus subtilis (strain 168).